The primary structure comprises 450 residues: 23S rRNA (uracil(1939)-C(5))-methyltransferase RlmD (450 aa).

In terms of domain architecture, TRAM spans 12–70 (SKQLSAKLSLSVNQLDHLGAGIAQHQGKVVFIPGALPDETVTVQLTEQKKNYARAKLIK). Residues Cys-83, Cys-89, Cys-92, and Cys-171 each coordinate [4Fe-4S] cluster. S-adenosyl-L-methionine-binding residues include Gln-283, Phe-312, Asn-317, Glu-333, Asp-360, and Asp-380. The active-site Nucleophile is the Cys-406.

This sequence belongs to the class I-like SAM-binding methyltransferase superfamily. RNA M5U methyltransferase family. RlmD subfamily.

It catalyses the reaction uridine(1939) in 23S rRNA + S-adenosyl-L-methionine = 5-methyluridine(1939) in 23S rRNA + S-adenosyl-L-homocysteine + H(+). In terms of biological role, catalyzes the formation of 5-methyl-uridine at position 1939 (m5U1939) in 23S rRNA. The protein is 23S rRNA (uracil(1939)-C(5))-methyltransferase RlmD of Shewanella baltica (strain OS223).